Here is a 742-residue protein sequence, read N- to C-terminus: 5-methyltetrahydropteroyltriglutamate--homocysteine methyltransferase (742 aa).

5-methyltetrahydropteroyltri-L-glutamate-binding positions include 18-21 (REWK) and lysine 112. Residues 420-422 (IGS) and glutamate 473 each bind L-homocysteine. Residues 420-422 (IGS) and glutamate 473 each bind L-methionine. Tryptophan 550 is a binding site for 5-methyltetrahydropteroyltri-L-glutamate. Aspartate 588 contacts L-homocysteine. Residue aspartate 588 participates in L-methionine binding. A 5-methyltetrahydropteroyltri-L-glutamate-binding site is contributed by glutamate 594. Histidine 630, cysteine 632, and glutamate 654 together coordinate Zn(2+). Histidine 683 functions as the Proton donor in the catalytic mechanism. A Zn(2+)-binding site is contributed by cysteine 715.

The protein belongs to the vitamin-B12 independent methionine synthase family. It depends on Zn(2+) as a cofactor.

It carries out the reaction 5-methyltetrahydropteroyltri-L-glutamate + L-homocysteine = tetrahydropteroyltri-L-glutamate + L-methionine. The protein operates within amino-acid biosynthesis; L-methionine biosynthesis via de novo pathway; L-methionine from L-homocysteine (MetE route): step 1/1. Its function is as follows. Catalyzes the transfer of a methyl group from 5-methyltetrahydrofolate to homocysteine resulting in methionine formation. This chain is 5-methyltetrahydropteroyltriglutamate--homocysteine methyltransferase, found in Staphylococcus aureus (strain JH9).